We begin with the raw amino-acid sequence, 461 residues long: pre-mRNA splicing regulator USH1G (461 aa).

3 ANK repeats span residues 31–60, 64–93, and 97–126; these read DGMT…DPDK, WGNT…NIWC, and DYHT…KQSS. Disordered stretches follow at residues 208–243 and 332–368; these read GTAR…SARS and EDGG…DRSC. A compositionally biased stretch (basic residues) spans 210–222; it reads ARGKTKMQKKLER. An SAM domain is found at 385–447; that stretch reads LEPETSPLET…KILGAVRRRR (63 aa). The residue at position 422 (S422) is a Phosphoserine; by CK2.

In terms of assembly, part of a complex composed of USH1C, USH1G and MYO7A. Interacts with USH1C (via the first PDZ domain). Interacts with PDZD7. Interacts with CDH23 and PCDH15; these interactions may recruit USH1G to the plasma membrane. Interacts with intraflagellar transport proteins IFT20, IFT52 and IFT57. Interacts with splicing factors SF3B1, PRPF6, PRPF31 and SON. Interacts with the U4/U6.U5 tri-small nuclear ribonucleoprotein (tri-snRNP) complex in the presence of pre-mRNAs. Interacts (via SAM domain) with MAGI2 (via PDZ 6 domain); the interaction is triggered by phosphorylation of USH1G by CK2 and negatively regulates MAGI2-mediated endocytosis. As to expression, expressed in vestibule of the inner ear, eye and small intestine.

The protein localises to the cytoplasm. Its subcellular location is the cytosol. It is found in the cytoskeleton. It localises to the cell membrane. The protein resides in the cell projection. The protein localises to the cilium. Its subcellular location is the nucleus speckle. It is found in the nucleus. It localises to the cajal body. The protein resides in the microtubule organizing center. The protein localises to the centrosome. Its subcellular location is the photoreceptor inner segment. Its function is as follows. Plays a role in pre-mRNA splicing by regulating the release and transfer of U4/U6.U5 tri-small nuclear ribonucleoprotein (tri-snRNP) complexes from their assembly site in Cajal bodies to nuclear speckles, thereby contributing to the assembly of the pre-catalytic spliceosome on target pre-mRNAs. May also participate in recycling of snRNPs back to Cajal bodies during splicing. Plays a role in regulating MAGI2-mediated endocytosis. Anchoring/scaffolding protein that is a part of the functional network formed by USH1C, USH1G, CDH23 and MYO7A that mediates mechanotransduction in cochlear hair cells. Required for normal development and maintenance of cochlear hair cell bundles. Required for normal hearing. The chain is pre-mRNA splicing regulator USH1G (USH1G) from Homo sapiens (Human).